Consider the following 853-residue polypeptide: Protein translocase subunit SecA (853 aa).

Residues Q77, 95 to 99 (GEGKT), and D532 contribute to the ATP site.

This sequence belongs to the SecA family. As to quaternary structure, monomer and homodimer. Part of the essential Sec protein translocation apparatus which comprises SecA, SecYEG and auxiliary proteins SecDF. Other proteins may also be involved.

It is found in the cell inner membrane. Its subcellular location is the cytoplasm. It carries out the reaction ATP + H2O + cellular proteinSide 1 = ADP + phosphate + cellular proteinSide 2.. Functionally, part of the Sec protein translocase complex. Interacts with the SecYEG preprotein conducting channel. Has a central role in coupling the hydrolysis of ATP to the transfer of proteins into and across the cell membrane, serving as an ATP-driven molecular motor driving the stepwise translocation of polypeptide chains across the membrane. The chain is Protein translocase subunit SecA from Thermosipho melanesiensis (strain DSM 12029 / CIP 104789 / BI429).